A 428-amino-acid chain; its full sequence is AA14 family lytic polysaccharide monooxygenase A (428 aa).

A signal peptide spans 1 to 21 (MLRSLPASLALVAAFASKASA). 2 N-linked (GlcNAc...) asparagine glycosylation sites follow: N34 and N52. 5 disulfide bridges follow: C88/C112, C131/C158, C174/C179, C181/C203, and C223/C239. N155 carries an N-linked (GlcNAc...) asparagine glycan. Disordered stretches follow at residues 216 to 239 (KPAVPRRCGADPDHGKPDPTPGNC) and 292 to 428 (SSGT…HNAH). Residues 223 to 232 (CGADPDHGKP) show a composition bias toward basic and acidic residues. A glycan (N-linked (GlcNAc...) asparagine) is linked at N238. Residues 292 to 379 (SSGTGSSPTS…SVATEASSSP (88 aa)) show a composition bias toward low complexity. Polar residues predominate over residues 380 to 402 (IASTTVDEAVVSSSTVGSINPTR). Residues 414–428 (QKKKRKHARHLHNAH) are compositionally biased toward basic residues.

Cu(2+) serves as cofactor.

Its subcellular location is the secreted. Its function is as follows. Lytic polysaccharide monooxygenase (LPMO) showing oxidase and peroxidase activities that are common for LPMOs. Catalysis by LPMOs requires the reduction of the active-site copper from Cu(II) to Cu(I) by a reducing agent and H(2)O(2) or O(2) as a cosubstrate. Shows no activity on cellulose-associated xylan or any other tested polysaccharide substrate, meaning that the substrate rremains unknown. This Trametes coccinea (strain BRFM310) (Pycnoporus coccineus) protein is AA14 family lytic polysaccharide monooxygenase A.